Here is a 123-residue protein sequence, read N- to C-terminus: Ribonuclease P protein component (123 aa).

It belongs to the RnpA family. Consists of a catalytic RNA component (M1 or rnpB) and a protein subunit.

The enzyme catalyses Endonucleolytic cleavage of RNA, removing 5'-extranucleotides from tRNA precursor.. Its function is as follows. RNaseP catalyzes the removal of the 5'-leader sequence from pre-tRNA to produce the mature 5'-terminus. It can also cleave other RNA substrates such as 4.5S RNA. The protein component plays an auxiliary but essential role in vivo by binding to the 5'-leader sequence and broadening the substrate specificity of the ribozyme. This is Ribonuclease P protein component from Streptomyces avermitilis (strain ATCC 31267 / DSM 46492 / JCM 5070 / NBRC 14893 / NCIMB 12804 / NRRL 8165 / MA-4680).